Consider the following 204-residue polypeptide: Holliday junction branch migration complex subunit RuvA (204 aa).

The interval 1–64 (MIGRVTGILV…EDAHLLFGFS (64 aa)) is domain I. The interval 65–143 (HKQDRSLFRE…GLQQTDFFIK (79 aa)) is domain II. The interval 144 to 155 (SSHLPGIKCSKL) is flexible linker. Residues 156–204 (DQSLQLDEAVSALIALGYKPIEAEKMVKKVLKADLTSEQLIREALKAAL) are domain III.

This sequence belongs to the RuvA family. As to quaternary structure, homotetramer. Forms an RuvA(8)-RuvB(12)-Holliday junction (HJ) complex. HJ DNA is sandwiched between 2 RuvA tetramers; dsDNA enters through RuvA and exits via RuvB. An RuvB hexamer assembles on each DNA strand where it exits the tetramer. Each RuvB hexamer is contacted by two RuvA subunits (via domain III) on 2 adjacent RuvB subunits; this complex drives branch migration. In the full resolvosome a probable DNA-RuvA(4)-RuvB(12)-RuvC(2) complex forms which resolves the HJ.

The protein resides in the cytoplasm. Its function is as follows. The RuvA-RuvB-RuvC complex processes Holliday junction (HJ) DNA during genetic recombination and DNA repair, while the RuvA-RuvB complex plays an important role in the rescue of blocked DNA replication forks via replication fork reversal (RFR). RuvA specifically binds to HJ cruciform DNA, conferring on it an open structure. The RuvB hexamer acts as an ATP-dependent pump, pulling dsDNA into and through the RuvAB complex. HJ branch migration allows RuvC to scan DNA until it finds its consensus sequence, where it cleaves and resolves the cruciform DNA. The chain is Holliday junction branch migration complex subunit RuvA from Histophilus somni (strain 2336) (Haemophilus somnus).